Consider the following 171-residue polypeptide: Protein BTG1 (171 aa).

Serine 159 is subject to Phosphoserine.

This sequence belongs to the BTG family. Interacts with CNOT7 and CNOT8.

In terms of biological role, anti-proliferative protein. The chain is Protein BTG1 (BTG1) from Bos taurus (Bovine).